The chain runs to 118 residues: Large ribosomal subunit protein bL20 (118 aa).

It belongs to the bacterial ribosomal protein bL20 family.

Its function is as follows. Binds directly to 23S ribosomal RNA and is necessary for the in vitro assembly process of the 50S ribosomal subunit. It is not involved in the protein synthesizing functions of that subunit. This Ralstonia nicotianae (strain ATCC BAA-1114 / GMI1000) (Ralstonia solanacearum) protein is Large ribosomal subunit protein bL20.